The chain runs to 358 residues: Peptide chain release factor 1 (358 aa).

Position 233 is an N5-methylglutamine (Gln-233).

The protein belongs to the prokaryotic/mitochondrial release factor family. Methylated by PrmC. Methylation increases the termination efficiency of RF1.

It is found in the cytoplasm. Functionally, peptide chain release factor 1 directs the termination of translation in response to the peptide chain termination codons UAG and UAA. The polypeptide is Peptide chain release factor 1 (Staphylococcus aureus (strain MSSA476)).